The following is a 220-amino-acid chain: Ribosome biogenesis protein 15 (220 aa).

The disordered stretch occupies residues 1–82 (MVKSTSKTST…KQANEKKSKD (82 aa)). Positions 9–30 (STKETVTKQPTEEKPIQEKEEL) are enriched in basic and acidic residues. Positions 39 to 60 (SDEEDEKDEDEIEGLAASDDEQ) are enriched in acidic residues. The RRM domain occupies 91-169 (GIIYVSRLPH…HLLQVRVLPK (79 aa)).

In terms of assembly, component of the pre-66S ribosomal particle. Interacts with NOP7 and RRP1.

The protein localises to the cytoplasm. It is found in the nucleus. The protein resides in the nucleolus. Functionally, involved in the biogenesis of the 60S ribosomal subunit. Required for pre-rRNA processing and cytokinesis. Associates with the precursors of the 25S and 5.8S rRNAs. The protein is Ribosome biogenesis protein 15 of Saccharomyces cerevisiae (strain ATCC 204508 / S288c) (Baker's yeast).